The primary structure comprises 241 residues: 2-C-methyl-D-erythritol 4-phosphate cytidylyltransferase (241 aa).

The protein belongs to the IspD/TarI cytidylyltransferase family. IspD subfamily.

The catalysed reaction is 2-C-methyl-D-erythritol 4-phosphate + CTP + H(+) = 4-CDP-2-C-methyl-D-erythritol + diphosphate. The protein operates within isoprenoid biosynthesis; isopentenyl diphosphate biosynthesis via DXP pathway; isopentenyl diphosphate from 1-deoxy-D-xylulose 5-phosphate: step 2/6. Catalyzes the formation of 4-diphosphocytidyl-2-C-methyl-D-erythritol from CTP and 2-C-methyl-D-erythritol 4-phosphate (MEP). This chain is 2-C-methyl-D-erythritol 4-phosphate cytidylyltransferase, found in Hahella chejuensis (strain KCTC 2396).